Consider the following 311-residue polypeptide: Pyrimidine-specific ribonucleoside hydrolase RihA (311 aa).

His-240 is an active-site residue.

This sequence belongs to the IUNH family. RihA subfamily.

Hydrolyzes cytidine or uridine to ribose and cytosine or uracil, respectively. The sequence is that of Pyrimidine-specific ribonucleoside hydrolase RihA from Klebsiella pneumoniae (strain 342).